A 121-amino-acid chain; its full sequence is Neuromedin-B (121 aa).

Positions 1–24 (MARRAGGARMFGSLLLFALLAAGV) are cleaved as a signal peptide. Position 56 is a methionine amide (Met-56). Residues 60-121 (SLEPSSPSPL…RRLLVQILQK (62 aa)) constitute a propeptide that is removed on maturation.

It belongs to the bombesin/neuromedin-B/ranatensin family.

Its subcellular location is the secreted. It localises to the cell projection. The protein localises to the neuron projection. Its function is as follows. Stimulates smooth muscle contraction. Induces sighing by acting directly on the pre-Botzinger complex, a cluster of several thousand neurons in the ventrolateral medulla responsible for inspiration during respiratory activity. Contributes to the induction of sneezing following exposure to chemical irritants or allergens which causes release of NMB by nasal sensory neurons and activation of NMBR-expressing neurons in the sneeze-evoking region of the brainstem. These in turn activate neurons of the caudal ventral respiratory group, giving rise to the sneezing response. Contributes to induction of acute itch, possibly through activation of the NMBR receptor on dorsal root ganglion neurons. Increases expression of NMBR and steroidogenic mediators STAR, CYP11A1 and HSD3B1 in Leydig cells, induces secretion of testosterone by Leydig cells and also promotes Leydig cell proliferation. Plays a role in the innate immune response to influenza A virus infection by enhancing interferon alpha expression and reducing expression of IL6. Plays a role in CSF1-induced proliferation of osteoclast precursors by contributing to the positive regulation of the expression of the CSF1 receptor CSF1R. The polypeptide is Neuromedin-B (NMB) (Homo sapiens (Human)).